The primary structure comprises 317 residues: uncharacterized protein (317 aa).

6 helical membrane-spanning segments follow: residues 14–34 (IPLLSNDLISMLSGGVAATVS), 72–92 (LIGFFRGNGTNCLRAFPYGAV), 119–139 (LLFGAIAGAASCATTYPLDIA), 196–216 (TLLNVVPYVSICFFTFEFCKQ), 230–250 (LFLGGFTGIIGQTLTFPADVL), and 291–307 (SNMLKIIPVMSITWYTY). 3 Solcar repeats span residues 18-103 (SNDL…LKQR), 113-217 (LENH…CKQK), and 224-313 (LTAF…VSKM).

This sequence belongs to the mitochondrial carrier (TC 2.A.29) family.

The protein resides in the mitochondrion inner membrane. This is an uncharacterized protein from Schizosaccharomyces pombe (strain 972 / ATCC 24843) (Fission yeast).